The chain runs to 37 residues: Large ribosomal subunit protein bL36 (37 aa).

It belongs to the bacterial ribosomal protein bL36 family.

The sequence is that of Large ribosomal subunit protein bL36 from Desulfitobacterium hafniense (strain Y51).